Reading from the N-terminus, the 159-residue chain is Small ribosomal subunit protein bS6 (159 aa).

Residues 93-151 (VDEHEEGPSAMMRKADRDRERDDRGPREGGFRGDREGRGDREGGGFRGDRGPRRPREDA) are compositionally biased toward basic and acidic residues. The segment at 93 to 159 (VDEHEEGPSA…DADTAAASEE (67 aa)) is disordered.

The protein belongs to the bacterial ribosomal protein bS6 family.

Its function is as follows. Binds together with bS18 to 16S ribosomal RNA. In Rhodopseudomonas palustris (strain HaA2), this protein is Small ribosomal subunit protein bS6.